The primary structure comprises 333 residues: G-protein coupled receptor 146 (333 aa).

The Extracellular segment spans residues methionine 1–arginine 22. Residue asparagine 8 is glycosylated (N-linked (GlcNAc...) asparagine). A helical membrane pass occupies residues leucine 23 to tyrosine 43. The Cytoplasmic segment spans residues asparagine 44–tyrosine 64. The helical transmembrane segment at phenylalanine 65 to glycine 85 threads the bilayer. The Extracellular portion of the chain corresponds to proline 86–histidine 101. A helical membrane pass occupies residues valine 102–leucine 122. Over serine 123–histidine 145 the chain is Cytoplasmic. The chain crosses the membrane as a helical span at residues valine 146–isoleucine 166. Over cysteine 167 to alanine 188 the chain is Extracellular. Residues isoleucine 189–isoleucine 209 traverse the membrane as a helical segment. The Cytoplasmic segment spans residues serine 210 to arginine 232. Residues leucine 233–glycine 253 traverse the membrane as a helical segment. Residues histidine 254–aspartate 277 are Extracellular-facing. Residues leucine 278 to asparagine 298 traverse the membrane as a helical segment. The Cytoplasmic portion of the chain corresponds to lysine 299–alanine 333.

This sequence belongs to the G-protein coupled receptor 1 family.

The protein localises to the cell membrane. GPCR receptor required for the regulation of plasma cholesterol levels. Receptor for CHLSN, a gut derived hormone which mediates an inhibitory effect of intestinal cholesterol absorption on hepatic cholesterol synthesis. Cholesin-binding exerts an antagonistic effect by inhibiting PKA signaling and suppressing SREBF2-controlled cholesterol in the liver. The protein is G-protein coupled receptor 146 (Gpr146) of Mus musculus (Mouse).